We begin with the raw amino-acid sequence, 301 residues long: MPT51 antigen (301 aa).

The first 36 residues, 1–36, serve as a signal peptide directing secretion; that stretch reads MRGLSAVVRVLCVAALAVGVFAAAVLLAGTAGNAKA.

Belongs to the mycobacterial A85 antigen family. Homodimer.

Its subcellular location is the secreted. May have a role in host tissue attachment, whereby ligands may include the serum protein fibronectin and small sugars. This Mycobacterium leprae (strain TN) protein is MPT51 antigen (mpt51).